Here is a 198-residue protein sequence, read N- to C-terminus: tRNA (cytidine(56)-2'-O)-methyltransferase (198 aa).

Residues L81, 110–114 (GAEKV), and 128–135 (IGNQPHSE) each bind S-adenosyl-L-methionine. Residues 178–198 (DAKQAEASGEGASRKNGQLPS) form a disordered region.

The protein belongs to the aTrm56 family. In terms of assembly, homodimer.

Its subcellular location is the cytoplasm. The catalysed reaction is cytidine(56) in tRNA + S-adenosyl-L-methionine = 2'-O-methylcytidine(56) in tRNA + S-adenosyl-L-homocysteine + H(+). Functionally, specifically catalyzes the AdoMet-dependent 2'-O-ribose methylation of cytidine at position 56 in tRNAs. In Pyrococcus abyssi (strain GE5 / Orsay), this protein is tRNA (cytidine(56)-2'-O)-methyltransferase.